The following is a 472-amino-acid chain: Trigger factor (472 aa).

Positions 174–261 (GDIAVLGFKG…LKDLKTRELP (88 aa)) constitute a PPIase FKBP-type domain. The interval 430–472 (ENSTLTEQAPAADDADDAEKPAAKKKPAAKKKTPAKSKTDAEA) is disordered. Basic residues predominate over residues 452-464 (AKKKPAAKKKTPA).

Belongs to the FKBP-type PPIase family. Tig subfamily.

The protein localises to the cytoplasm. The enzyme catalyses [protein]-peptidylproline (omega=180) = [protein]-peptidylproline (omega=0). Its function is as follows. Involved in protein export. Acts as a chaperone by maintaining the newly synthesized protein in an open conformation. Functions as a peptidyl-prolyl cis-trans isomerase. In Parasynechococcus marenigrum (strain WH8102), this protein is Trigger factor.